A 60-amino-acid polypeptide reads, in one-letter code: Myrmicitoxin(1)-Pr4a (60 aa).

The N-terminal stretch at 1 to 23 (MKAIIFLFAVLTVVAIIIPIISG) is a signal peptide. Residues 24–33 (EPNAGPHAAS) constitute a propeptide that is removed on maturation. Q59 carries the post-translational modification Glutamine amide.

It belongs to the formicidae venom clade 2 family. In terms of tissue distribution, expressed by the venom gland.

It localises to the secreted. Functionally, toxin that causes a rapid and irreversible paralysis when intrathoracically injected into insects (blowflies). Does not cause spontaneous nocifensive behaviors by intraplantar injection in mice. This Pogonomyrmex rugosus (Desert harvester ant) protein is Myrmicitoxin(1)-Pr4a.